A 207-amino-acid polypeptide reads, in one-letter code: MTHPDQKPWILGLTGGIGSGKSAAAQCFTNLGIDTVDADHASRWVVEPGRPALEQIAAHFGKGLLQASGELDRGALRKLIFENPEQRRWLEALLHPLINQEIVSHLAKAKSPYAILVSPLLIESGQYRMVQRLLVIDTPAHLQIERTMLRDSSSQEQVEAILKVQIQREDRLRHADDVLVNDRDHAWLNSEVERLHHFYLTLRGGQS.

Positions 10-207 (ILGLTGGIGS…FYLTLRGGQS (198 aa)) constitute a DPCK domain. ATP is bound at residue 18 to 23 (GSGKSA).

It belongs to the CoaE family.

The protein localises to the cytoplasm. It carries out the reaction 3'-dephospho-CoA + ATP = ADP + CoA + H(+). The protein operates within cofactor biosynthesis; coenzyme A biosynthesis; CoA from (R)-pantothenate: step 5/5. Functionally, catalyzes the phosphorylation of the 3'-hydroxyl group of dephosphocoenzyme A to form coenzyme A. This is Dephospho-CoA kinase from Pseudomonas savastanoi pv. phaseolicola (strain 1448A / Race 6) (Pseudomonas syringae pv. phaseolicola (strain 1448A / Race 6)).